The primary structure comprises 89 residues: Probable Fe(2+)-trafficking protein (89 aa).

It belongs to the Fe(2+)-trafficking protein family.

In terms of biological role, could be a mediator in iron transactions between iron acquisition and iron-requiring processes, such as synthesis and/or repair of Fe-S clusters in biosynthetic enzymes. The polypeptide is Probable Fe(2+)-trafficking protein (Legionella pneumophila (strain Paris)).